Consider the following 177-residue polypeptide: Anti-apoptotic protein NR13 (177 aa).

The BH1 signature appears at 75-94 (LETDGGLNWGRLLALVVFAG). The chain crosses the membrane as a helical span at residues 86 to 106 (LLALVVFAGTLAAALAESACE). The short motif at 126–141 (EWMEEHGGWDGFCRFF) is the BH2 element. A helical transmembrane segment spans residues 156-176 (SNAIMAAAGFGIAGLAFLLVV).

The protein belongs to the Bcl-2 family. Interacts with BAX. Mainly expressed in neural and muscular tissues.

It is found in the cell membrane. Shows anti-apoptotic properties. Counteract the pro-apoptotic activity of BAX. This is Anti-apoptotic protein NR13 (NR13) from Coturnix japonica (Japanese quail).